The following is a 471-amino-acid chain: 6-phosphofructo-2-kinase/fructose-2,6-bisphosphatase 1 (471 aa).

The residue at position 2 (serine 2) is an N-acetylserine. The segment at 2–250 (SREMGELTQT…AYYLMNIHVT (249 aa)) is 6-phosphofructo-2-kinase. Position 33 is a phosphoserine; by PKA (serine 33). 49–57 (GLPARGKTY) serves as a coordination point for ATP. Residues arginine 82 and arginine 105 each coordinate beta-D-fructose 6-phosphate. Aspartate 131 is an active-site residue. Beta-D-fructose 6-phosphate-binding residues include threonine 133 and arginine 139. Phosphoserine is present on serine 141. Residue cysteine 161 is part of the active site. Residue 170–175 (NIKQVK) coordinates ATP. 3 residues coordinate beta-D-fructose 6-phosphate: lysine 175, arginine 196, and tyrosine 200. The fructose-2,6-bisphosphatase stretch occupies residues 251 to 471 (PRSIYLCRHG…EALDTVPAHY (221 aa)). Arginine 258 contacts beta-D-fructose 2,6-bisphosphate. The active-site Tele-phosphohistidine intermediate is the histidine 259. The beta-D-fructose 2,6-bisphosphate site is built by asparagine 265, glycine 271, and arginine 308. Glutamate 328 acts as the Proton donor/acceptor in catalysis. Tyrosine 339, arginine 353, lysine 357, tyrosine 368, glutamine 394, and arginine 398 together coordinate beta-D-fructose 2,6-bisphosphate. 350 to 353 (FALR) provides a ligand contact to ATP. Residues 394–398 (QAVMR) and tyrosine 430 contribute to the ATP site.

In the C-terminal section; belongs to the phosphoglycerate mutase family. In terms of assembly, homodimer. In terms of tissue distribution, liver.

The catalysed reaction is beta-D-fructose 2,6-bisphosphate + H2O = beta-D-fructose 6-phosphate + phosphate. The enzyme catalyses beta-D-fructose 6-phosphate + ATP = beta-D-fructose 2,6-bisphosphate + ADP + H(+). Its activity is regulated as follows. Phosphorylation at Ser-33 inhibits the kinase and activates the bisphosphatase. Its function is as follows. Synthesis and degradation of fructose 2,6-bisphosphate. The protein is 6-phosphofructo-2-kinase/fructose-2,6-bisphosphatase 1 of Mus musculus (Mouse).